Here is a 349-residue protein sequence, read N- to C-terminus: 5-deoxyribose 1-phosphate isomerase (349 aa).

Substrate is bound by residues 49 to 51, Arg92, and Gln199; that span reads RGA. The Proton donor role is filled by Asp240. 250-251 serves as a coordination point for substrate; sequence NK.

Belongs to the EIF-2B alpha/beta/delta subunits family. DrdI subfamily.

It catalyses the reaction 5-deoxy-alpha-D-ribose 1-phosphate = 5-deoxy-D-ribulose 1-phosphate. The protein operates within carbohydrate degradation. Functionally, catalyzes the isomerization of 5-deoxy-alpha-D-ribose 1-phosphate to 5-deoxy-D-ribulose 1-phosphate, as part of a 5-deoxyribose salvage pathway that recycles this toxic radical SAM enzyme by-product to mainstream metabolites. The chain is 5-deoxyribose 1-phosphate isomerase from Clostridium botulinum (strain 657 / Type Ba4).